A 208-amino-acid polypeptide reads, in one-letter code: Ras-related protein RABH1b (208 aa).

16 to 23 (GDQSVGKT) provides a ligand contact to GTP. Residues 38–46 (YQATIGIDF) carry the Effector region motif. GTP is bound by residues 64–68 (DTAGQ), 122–125 (NKTD), and 152–153 (SA). 2 S-geranylgeranyl cysteine lipidation sites follow: Cys206 and Cys208. Cysteine methyl ester is present on Cys208.

The protein belongs to the small GTPase superfamily. Rab family. As to quaternary structure, interacts with the C-terminus of GC5, but not with GC3. Expressed in roots, stems, leaves and flowers.

It localises to the golgi apparatus membrane. It is found in the cytoplasm. The protein localises to the cytosol. Functionally, protein transport. Regulator of membrane traffic from the Golgi apparatus towards the endoplasmic reticulum (ER). Binds GTP and GDP and possesses intrinsic GTPase activity. In Arabidopsis thaliana (Mouse-ear cress), this protein is Ras-related protein RABH1b (RABH1B).